The following is a 90-amino-acid chain: uncharacterized protein (90 aa).

2 consecutive transmembrane segments (helical) span residues 23 to 43 (ITTI…VGLF) and 48 to 68 (VTLL…IIGF).

Its subcellular location is the cell membrane. This is an uncharacterized protein from Rickettsia prowazekii (strain Madrid E).